The sequence spans 335 residues: MKLKLKNVFLAYFLVSIAGLLYALVQLGQPCDCLPPLRAAAEQLRQKDLRISQLQADLRRPPPVPAQPPEPEALPTIYVITPTYARLVQKAELVRLSQTLSLVPRLHWLLVEDAESPTPLVSGLLAASGLLFTHLAVLTPKAQRLREGEPGWVRPRGVEQRNKALDWLRGKGGAVGGEKDPPPPGTQGVVYFADDDNTYSRELFKEMRWTRGVSVWPVGLVGGLRFEGPRVQDGRVVGFHTAWEPNRPFPLDMAGFAVALPLLLAKPNAQFDATAPRGHLESSLLSHLVDPKDLEPRAANCTQVLVWHTRTEKPKMKQEEQLQRQGQGSDPAIEV.

The Cytoplasmic segment spans residues 1 to 7; the sequence is MKLKLKN. Residues 8–28 form a helical; Signal-anchor for type II membrane protein membrane-spanning segment; it reads VFLAYFLVSIAGLLYALVQLG. Over 29-335 the chain is Lumenal; sequence QPCDCLPPLR…GQGSDPAIEV (307 aa). Asp-196 provides a ligand contact to Mn(2+). Glu-281 serves as the catalytic Proton acceptor. Asn-300 carries an N-linked (GlcNAc...) asparagine glycan. The span at 312–322 shows a compositional bias: basic and acidic residues; it reads EKPKMKQEEQL. Positions 312 to 335 are disordered; the sequence is EKPKMKQEEQLQRQGQGSDPAIEV.

Belongs to the glycosyltransferase 43 family. As to quaternary structure, homodimer; disulfide-linked. Interacts with PXYLP1; the interaction increases the 2-phosphoxylose phosphatase activity of PXYLP1 during completion of linkage region formation in a B3GAT3-mediated manner. Requires Mn(2+) as cofactor. Post-translationally, N-glycosylated. As to expression, liver, brain and heart. Moderate expression seen in lung, skeletal muscle, kidney and testis.

It is found in the golgi apparatus membrane. The protein resides in the golgi apparatus. The protein localises to the cis-Golgi network. It carries out the reaction 3-O-(beta-D-galactosyl-(1-&gt;3)-beta-D-galactosyl-(1-&gt;4)-beta-D-xylosyl)-L-seryl-[protein] + UDP-alpha-D-glucuronate = 3-O-(beta-D-GlcA-(1-&gt;3)-beta-D-Gal-(1-&gt;3)-beta-D-Gal-(1-&gt;4)-beta-D-Xyl)-L-seryl-[protein] + UDP + H(+). It functions in the pathway protein modification; protein glycosylation. Glycosaminoglycans biosynthesis. Involved in forming the linkage tetrasaccharide present in heparan sulfate and chondroitin sulfate. Transfers a glucuronic acid moiety from the uridine diphosphate-glucuronic acid (UDP-GlcUA) to the common linkage region trisaccharide Gal-beta-1,3-Gal-beta-1,4-Xyl covalently bound to a Ser residue at the glycosaminylglycan attachment site of proteoglycans. Can also play a role in the biosynthesis of l2/HNK-1 carbohydrate epitope on glycoproteins. Highest activity seen with Gal-beta-1,3-Gal-beta-O-R (where R=naphthalenemethanol or benzyl alcohol). Stimulates 2-phosphoxylose phosphatase activity of PXYLP1 in presence of uridine diphosphate-glucuronic acid (UDP-GlcUA) during completion of linkage region formation. This Cricetulus griseus (Chinese hamster) protein is Galactosylgalactosylxylosylprotein 3-beta-glucuronosyltransferase 3 (B3GAT3).